A 501-amino-acid polypeptide reads, in one-letter code: Probable cysteine desulfurase, mitochondrial (501 aa).

Residues 172-173, Asn252, Gln280, and 300-302 contribute to the pyridoxal 5'-phosphate site; these read AT and SAH. Residue Lys303 is modified to N6-(pyridoxal phosphate)lysine. Thr340 serves as a coordination point for pyridoxal 5'-phosphate. Cys425 (cysteine persulfide intermediate) is an active-site residue. Cys425 lines the [2Fe-2S] cluster pocket.

Belongs to the class-V pyridoxal-phosphate-dependent aminotransferase family. NifS/IscS subfamily. The cofactor is pyridoxal 5'-phosphate.

It is found in the mitochondrion. The enzyme catalyses (sulfur carrier)-H + L-cysteine = (sulfur carrier)-SH + L-alanine. Functionally, catalyzes the removal of elemental sulfur from cysteine to produce alanine. It supplies the inorganic sulfur for iron-sulfur (Fe-S) clusters. Plays a role in both tRNA-processing and mitochondrial metabolism. Involved in the 2-thio-modification of both 5-carboxymethylaminomethyl-2-thiouridine in mitochondrial tRNAs and 5-methoxycarbonylmethyl-2-thiouridine (mcm5s2U) in cytoplasmic tRNAs. This chain is Probable cysteine desulfurase, mitochondrial, found in Schizosaccharomyces pombe (strain 972 / ATCC 24843) (Fission yeast).